We begin with the raw amino-acid sequence, 261 residues long: Tyrosine phosphatase-like protein H5 (261 aa).

Residues 26-261 (LIKKEHDKVL…ESVEQEYFVP (236 aa)) form the Tyrosine-protein phosphatase domain.

Belongs to the protein-tyrosine phosphatase family.

The chain is Tyrosine phosphatase-like protein H5 (H6) from Microplitis demolitor bracovirus (isolate Webb) (MdBV).